The chain runs to 517 residues: Perilipin-1 (517 aa).

The residue at position 81 (S81) is a Phosphoserine. T85 bears the Phosphothreonine mark. S126, S130, S132, S137, and S174 each carry phosphoserine. A disordered region spans residues 195–216; the sequence is DKESAPSSGRQRTQKAPKAKPS. Phosphothreonine occurs at positions 223, 298, and 300. The segment at 286–320 is disordered; the sequence is LAASQDESHDDQTDTEGEETDDEEEEEESEAEENV. Positions 290-321 are required for interaction with CIDEC; sequence QDESHDDQTDTEGEETDDEEEEEESEAEENVL. Residues 298–318 show a composition bias toward acidic residues; it reads TDTEGEETDDEEEEEESEAEE. S314, S384, S386, S410, S433, S439, S460, S492, and S494 each carry phosphoserine. The tract at residues 425–490 is disordered; it reads SAEAERKGSG…AMPREKPARR (66 aa).

This sequence belongs to the perilipin family. In terms of assembly, interacts with ABHD5. Interacts with CIDEC. Interacts with AQP7. In terms of processing, major cAMP-dependent protein kinase-substrate in adipocytes, also dephosphorylated by PP1. When phosphorylated, may be maximally sensitive to HSL and when unphosphorylated, may play a role in the inhibition of lipolysis, by acting as a barrier in lipid droplet.

The protein resides in the endoplasmic reticulum. It localises to the lipid droplet. In terms of biological role, modulator of adipocyte lipid metabolism. Coats lipid storage droplets to protect them from breakdown by hormone-sensitive lipase (HSL). Its absence may result in leanness. Plays a role in unilocular lipid droplet formation by activating CIDEC. Their interaction promotes lipid droplet enlargement and directional net neutral lipid transfer. May modulate lipolysis and triglyceride levels. The chain is Perilipin-1 (Plin1) from Mus musculus (Mouse).